The sequence spans 271 residues: Dirigent protein 17 (271 aa).

Residues 1-12 (MEDTGSIKQEAQ) show a composition bias toward polar residues. Residues 1 to 22 (MEDTGSIKQEAQSHPPGIFEIP) form a disordered region. N-linked (GlcNAc...) asparagine glycosylation occurs at Asn255.

This sequence belongs to the plant dirigent protein family. As to quaternary structure, homodimer.

It localises to the secreted. The protein localises to the extracellular space. The protein resides in the apoplast. Functionally, dirigent proteins impart stereoselectivity on the phenoxy radical-coupling reaction, yielding optically active lignans from two molecules of coniferyl alcohol in the biosynthesis of lignans, flavonolignans, and alkaloids and thus plays a central role in plant secondary metabolism. The chain is Dirigent protein 17 (DIR17) from Arabidopsis thaliana (Mouse-ear cress).